A 477-amino-acid polypeptide reads, in one-letter code: UDP-N-acetylmuramate--L-alanine ligase (477 aa).

122–128 (GTHGKTT) serves as a coordination point for ATP.

This sequence belongs to the MurCDEF family.

It is found in the cytoplasm. The catalysed reaction is UDP-N-acetyl-alpha-D-muramate + L-alanine + ATP = UDP-N-acetyl-alpha-D-muramoyl-L-alanine + ADP + phosphate + H(+). It functions in the pathway cell wall biogenesis; peptidoglycan biosynthesis. Functionally, cell wall formation. In Xylella fastidiosa (strain M12), this protein is UDP-N-acetylmuramate--L-alanine ligase.